The chain runs to 104 residues: Glutaredoxin (104 aa).

Residues 3-103 enclose the Glutaredoxin domain; the sequence is MIKAQELVSS…PLLTEAGAVK (101 aa). Cys23 and Cys26 are disulfide-bonded.

This sequence belongs to the glutaredoxin family. CPYC subfamily.

Its subcellular location is the cytoplasm. Has a glutathione-disulfide oxidoreductase activity in the presence of NADPH and glutathione reductase. Reduces low molecular weight disulfides and proteins. In Vernicia fordii (Tung), this protein is Glutaredoxin.